The chain runs to 161 residues: Phosphopantetheine adenylyltransferase (161 aa).

A substrate-binding site is contributed by serine 9. Residues 9–10 (SF) and histidine 17 contribute to the ATP site. Substrate contacts are provided by lysine 41, threonine 73, and arginine 87. Residues 88 to 90 (GIR), glutamate 98, and 123 to 129 (YQYVSSS) contribute to the ATP site.

Belongs to the bacterial CoaD family. In terms of assembly, homohexamer. Mg(2+) is required as a cofactor.

It is found in the cytoplasm. It catalyses the reaction (R)-4'-phosphopantetheine + ATP + H(+) = 3'-dephospho-CoA + diphosphate. Its pathway is cofactor biosynthesis; coenzyme A biosynthesis; CoA from (R)-pantothenate: step 4/5. Reversibly transfers an adenylyl group from ATP to 4'-phosphopantetheine, yielding dephospho-CoA (dPCoA) and pyrophosphate. The protein is Phosphopantetheine adenylyltransferase of Levilactobacillus brevis (strain ATCC 367 / BCRC 12310 / CIP 105137 / JCM 1170 / LMG 11437 / NCIMB 947 / NCTC 947) (Lactobacillus brevis).